The sequence spans 400 residues: uncharacterized protein (400 aa).

This sequence belongs to the mimivirus R640 family.

It localises to the virion. This is an uncharacterized protein from Acanthamoeba polyphaga (Amoeba).